The following is a 137-amino-acid chain: Putative pre-16S rRNA nuclease (137 aa).

The protein belongs to the YqgF nuclease family.

Its subcellular location is the cytoplasm. In terms of biological role, could be a nuclease involved in processing of the 5'-end of pre-16S rRNA. The chain is Putative pre-16S rRNA nuclease from Anaeromyxobacter sp. (strain K).